A 311-amino-acid chain; its full sequence is Olfactory receptor 6B1 (311 aa).

Over 1 to 25 (MELENQTRVTKFILVGFPGSLSMRA) the chain is Extracellular. N-linked (GlcNAc...) asparagine glycosylation is present at N5. The chain crosses the membrane as a helical span at residues 26-46 (AMFLIFLVAYILTVAENVIII). The Cytoplasmic portion of the chain corresponds to 47–54 (LLVLQNRP). Residues 55–75 (LHKPMYFFLANLSFLETWYIS) form a helical membrane-spanning segment. Over 76–99 (VTVPKLLFSFWSVNNSISFTLCMI) the chain is Extracellular. C97 and C189 are disulfide-bonded. A helical transmembrane segment spans residues 100–120 (QLYFFIALMCTECVLLAAMAY). The Cytoplasmic portion of the chain corresponds to 121 to 139 (DRYVAICRPLHYPTIMSHG). Residues 140–160 (LCFRLALGSWAIGFGISLAKI) form a helical membrane-spanning segment. Topologically, residues 161–196 (YFISCLSFCGPNVINHFFCDISPVLNLSCTDMSITE) are extracellular. The helical transmembrane segment at 197-217 (LVDFILALVIFLFPLFITVLS) threads the bilayer. Residues 218–235 (YGCILATILCMPTGKQKA) lie on the Cytoplasmic side of the membrane. A helical transmembrane segment spans residues 236-256 (FSTCASHLVVVTIFYSAIIFM). At 257–269 (YARPRVIHAFNMN) the chain is on the extracellular side. The chain crosses the membrane as a helical span at residues 270-290 (KIISIFYAIVTPSLNPFIYCL). Over 291–311 (RNREVKEALKKLAYCQASRSD) the chain is Cytoplasmic.

Belongs to the G-protein coupled receptor 1 family.

Its subcellular location is the cell membrane. Its function is as follows. Odorant receptor. This chain is Olfactory receptor 6B1 (OR6B1), found in Homo sapiens (Human).